Reading from the N-terminus, the 169-residue chain is Lipoprotein signal peptidase (169 aa).

4 consecutive transmembrane segments (helical) span residues 10 to 30 (LPWLWITVLVFVLDQLSKAFF), 40 to 60 (IVVIPDLFSWTLAYNTGAAFS), 68 to 88 (WQRWLFALIAIVVSAILVVWL), and 94 to 114 (GETWLAIALALVLGGALGNLY). Residues aspartate 124 and aspartate 143 contribute to the active site. Residues 135-155 (YFPAFNLADSAITVGAVMLAL) traverse the membrane as a helical segment.

This sequence belongs to the peptidase A8 family.

The protein localises to the cell inner membrane. The enzyme catalyses Release of signal peptides from bacterial membrane prolipoproteins. Hydrolyzes -Xaa-Yaa-Zaa-|-(S,diacylglyceryl)Cys-, in which Xaa is hydrophobic (preferably Leu), and Yaa (Ala or Ser) and Zaa (Gly or Ala) have small, neutral side chains.. Its pathway is protein modification; lipoprotein biosynthesis (signal peptide cleavage). This protein specifically catalyzes the removal of signal peptides from prolipoproteins. The chain is Lipoprotein signal peptidase from Pseudomonas aeruginosa (strain UCBPP-PA14).